Consider the following 319-residue polypeptide: Acetyl-coenzyme A carboxylase carboxyl transferase subunit alpha (319 aa).

Residues Asn35 to Asp296 form the CoA carboxyltransferase C-terminal domain.

It belongs to the AccA family. In terms of assembly, acetyl-CoA carboxylase is a heterohexamer composed of biotin carboxyl carrier protein (AccB), biotin carboxylase (AccC) and two subunits each of ACCase subunit alpha (AccA) and ACCase subunit beta (AccD).

Its subcellular location is the cytoplasm. It carries out the reaction N(6)-carboxybiotinyl-L-lysyl-[protein] + acetyl-CoA = N(6)-biotinyl-L-lysyl-[protein] + malonyl-CoA. It functions in the pathway lipid metabolism; malonyl-CoA biosynthesis; malonyl-CoA from acetyl-CoA: step 1/1. Its function is as follows. Component of the acetyl coenzyme A carboxylase (ACC) complex. First, biotin carboxylase catalyzes the carboxylation of biotin on its carrier protein (BCCP) and then the CO(2) group is transferred by the carboxyltransferase to acetyl-CoA to form malonyl-CoA. The chain is Acetyl-coenzyme A carboxylase carboxyl transferase subunit alpha from Klebsiella pneumoniae subsp. pneumoniae (strain ATCC 700721 / MGH 78578).